Here is a 499-residue protein sequence, read N- to C-terminus: Glutamyl-tRNA(Gln) amidotransferase subunit A, mitochondrial (499 aa).

Catalysis depends on charge relay system residues Lys61 and Ser139. Ser163 serves as the catalytic Acyl-ester intermediate.

Belongs to the amidase family. GatA subfamily. Subunit of the heterotrimeric GatCAB amidotransferase (AdT) complex, composed of A, B and C subunits.

It is found in the mitochondrion. The catalysed reaction is L-glutamyl-tRNA(Gln) + L-glutamine + ATP + H2O = L-glutaminyl-tRNA(Gln) + L-glutamate + ADP + phosphate + H(+). Functionally, allows the formation of correctly charged Gln-tRNA(Gln) through the transamidation of misacylated Glu-tRNA(Gln) in the mitochondria. The reaction takes place in the presence of glutamine and ATP through an activated gamma-phospho-Glu-tRNA(Gln). The protein is Glutamyl-tRNA(Gln) amidotransferase subunit A, mitochondrial of Coccidioides posadasii (strain C735) (Valley fever fungus).